The chain runs to 185 residues: ATP synthase subunit b, chloroplastic (185 aa).

The chain crosses the membrane as a helical span at residues 31–49 (LINSGVVLGLPVYSGKGVL).

It belongs to the ATPase B chain family. F-type ATPases have 2 components, F(1) - the catalytic core - and F(0) - the membrane proton channel. F(1) has five subunits: alpha(3), beta(3), gamma(1), delta(1), epsilon(1). F(0) has four main subunits: a(1), b(1), b'(1) and c(10-14). The alpha and beta chains form an alternating ring which encloses part of the gamma chain. F(1) is attached to F(0) by a central stalk formed by the gamma and epsilon chains, while a peripheral stalk is formed by the delta, b and b' chains.

It is found in the plastid. The protein localises to the chloroplast thylakoid membrane. Its function is as follows. F(1)F(0) ATP synthase produces ATP from ADP in the presence of a proton or sodium gradient. F-type ATPases consist of two structural domains, F(1) containing the extramembraneous catalytic core and F(0) containing the membrane proton channel, linked together by a central stalk and a peripheral stalk. During catalysis, ATP synthesis in the catalytic domain of F(1) is coupled via a rotary mechanism of the central stalk subunits to proton translocation. Functionally, component of the F(0) channel, it forms part of the peripheral stalk, linking F(1) to F(0). This Huperzia lucidula (Shining clubmoss) protein is ATP synthase subunit b, chloroplastic.